A 311-amino-acid polypeptide reads, in one-letter code: Bifunctional pinoresinol-lariciresinol reductase (311 aa).

NADP(+) contacts are provided by residues 10-16, R35, and K44; that span reads GGTGYLG. K138 acts as the Proton acceptor in catalysis. NADP(+) is bound at residue R142. A substrate-binding site is contributed by H270.

It belongs to the NmrA-type oxidoreductase family. Isoflavone reductase subfamily. Dimer. As to expression, expressed in rhizomes, stems, and leaves.

It catalyses the reaction (-)-secoisolariciresinol + NADP(+) = (+)-lariciresinol + NADPH + H(+). It carries out the reaction (+)-lariciresinol + NADP(+) = (+)-pinoresinol + NADPH + H(+). It participates in aromatic compound metabolism; phenylpropanoid biosynthesis. Reductase involved in lignan biosynthesis. Also involved in the biosynthesis of etoposide, a chemotherapeutic compound of the topoisomerase inhibitor family. Catalyzes the enantioselective sequential conversion of (+)-pinoresinol into (+)-lariciresinol and of (+)-lariciresinol into (-)-secoisolariciresinol. Abstracts the 4R-hydride from the NADPH cofactor during catalysis. The sequence is that of Bifunctional pinoresinol-lariciresinol reductase from Sinopodophyllum hexandrum (Himalayan may apple).